The sequence spans 254 residues: Type III pantothenate kinase (254 aa).

ATP is bound at residue 6–13 (DVGNTNTV). Substrate-binding positions include Tyr-100 and 107-110 (GADR). Asp-109 serves as the catalytic Proton acceptor. Asp-129 contacts K(+). Thr-132 contacts ATP. Residue Thr-184 participates in substrate binding.

It belongs to the type III pantothenate kinase family. As to quaternary structure, homodimer. NH4(+) is required as a cofactor. Requires K(+) as cofactor.

Its subcellular location is the cytoplasm. The catalysed reaction is (R)-pantothenate + ATP = (R)-4'-phosphopantothenate + ADP + H(+). It participates in cofactor biosynthesis; coenzyme A biosynthesis; CoA from (R)-pantothenate: step 1/5. Catalyzes the phosphorylation of pantothenate (Pan), the first step in CoA biosynthesis. The sequence is that of Type III pantothenate kinase from Halalkalibacterium halodurans (strain ATCC BAA-125 / DSM 18197 / FERM 7344 / JCM 9153 / C-125) (Bacillus halodurans).